Here is a 94-residue protein sequence, read N- to C-terminus: Parvalbumin beta 4 (94 aa).

Ala1 is modified (N-acetylalanine). EF-hand domains lie at 36 to 63 and 67 to 94; these read FFAIIDQDHSGFIEEEELKLFLQTFSAG and LSDAETKTFLAAGDVDGDGMIGVDEFAA. Ca(2+) is bound by residues Asp41, Asp43, Ser45, Phe47, Glu49, Glu52, Asp80, Asp82, Asp84, Met86, and Glu91.

Belongs to the parvalbumin family.

In terms of biological role, in muscle, parvalbumin is thought to be involved in relaxation after contraction. It binds two calcium ions. The chain is Parvalbumin beta 4 from Merluccius bilinearis (Silver hake).